We begin with the raw amino-acid sequence, 92 residues long: Small ribosomal subunit protein uS19c (92 aa).

Belongs to the universal ribosomal protein uS19 family.

The protein resides in the plastid. It is found in the chloroplast. Protein S19 forms a complex with S13 that binds strongly to the 16S ribosomal RNA. This Daucus carota (Wild carrot) protein is Small ribosomal subunit protein uS19c.